The following is a 197-amino-acid chain: Imidazoleglycerol-phosphate dehydratase (197 aa).

This sequence belongs to the imidazoleglycerol-phosphate dehydratase family.

The protein resides in the cytoplasm. The catalysed reaction is D-erythro-1-(imidazol-4-yl)glycerol 3-phosphate = 3-(imidazol-4-yl)-2-oxopropyl phosphate + H2O. Its pathway is amino-acid biosynthesis; L-histidine biosynthesis; L-histidine from 5-phospho-alpha-D-ribose 1-diphosphate: step 6/9. In Hahella chejuensis (strain KCTC 2396), this protein is Imidazoleglycerol-phosphate dehydratase.